The chain runs to 332 residues: uncharacterized protein (332 aa).

This is an uncharacterized protein from Schizosaccharomyces pombe (strain 972 / ATCC 24843) (Fission yeast).